Consider the following 274-residue polypeptide: 4-diphosphocytidyl-2-C-methyl-D-erythritol kinase (274 aa).

The active site involves K7. 90–100 (PMGGGLGGGSS) lines the ATP pocket. The active site involves D132.

Belongs to the GHMP kinase family. IspE subfamily.

The enzyme catalyses 4-CDP-2-C-methyl-D-erythritol + ATP = 4-CDP-2-C-methyl-D-erythritol 2-phosphate + ADP + H(+). The protein operates within isoprenoid biosynthesis; isopentenyl diphosphate biosynthesis via DXP pathway; isopentenyl diphosphate from 1-deoxy-D-xylulose 5-phosphate: step 3/6. In terms of biological role, catalyzes the phosphorylation of the position 2 hydroxy group of 4-diphosphocytidyl-2C-methyl-D-erythritol. The chain is 4-diphosphocytidyl-2-C-methyl-D-erythritol kinase from Dechloromonas aromatica (strain RCB).